The following is a 62-amino-acid chain: Potassium channel toxin gamma-KTx 1.1 (62 aa).

Residues 1–20 (MKVLILIMIIASLMIMGVEM) form the signal peptide. Disulfide bonds link Cys25-Cys43, Cys31-Cys54, Cys40-Cys59, and Cys44-Cys61.

It belongs to the ergtoxin family. Gamma-KTx 1 subfamily. Post-translationally, after protein storage at -20 Celsius degrees during a couple of months, the Met-55 of a small number of toxins is naturally oxidized. This oxidized form is about three orders of magnitude less efficient (IC(50)=15 uM) than non-oxidized form. Expressed by the venom gland.

Its subcellular location is the secreted. Functionally, blocks human and rat Kv11.1/KCNH2/ERG1 and Kv11.3/KCNH7/ERG3, as well as rat (but not human) Kv11.2/KCNH6/ERG2 by binding to channel outer vestibule (S5P domain) with a 1:1 stoichiometry. Inhibition data are the following: hERG1 (reversible, IC(50)~7 nM), rERG1 (reversible, Kd=6.8 nM), rERG2 (irreversible, Kd=2.8 nM), hERG3 (irreversible, Kd=4.05 nM) and rERG3 (reversible, Kd=38.1 nM) potassium channels. The toxin potency is not affected by elevating potassium ion concentration from 2 to 98 mM. This toxin only blocks channels in a closed state. At high toxin concentrations, block of Kv11.1/KCNH2/ERG1 macroscopic current is incomplete (93.5%). This suggests a kinetic mechanism model with two different states of toxin-channel binding (T+C=TC*=TC; in the TC* state, the toxin binds the channel but does not occlude the pore, whereas in the TC state the toxin binds and occludes the pore). In this model, incomplete block is explained by the relatively fast dissociation rate from the blocked channel conformation (TC) relative to the rate of conversion of the toxin-channel encounter complex (TC*) to the blocked channel conformation (TC). The chain is Potassium channel toxin gamma-KTx 1.1 from Centruroides noxius (Mexican scorpion).